A 76-amino-acid chain; its full sequence is Alpha/kappa-conotoxin-like pl14.3 (76 aa).

The N-terminal stretch at 1–27 is a signal peptide; that stretch reads MPSVRSVACCCLLWMMLSVQLVTPGSP. Residues 28–39 constitute a propeptide that is removed on maturation; it reads ATAQLSGQRTAR. 2 disulfide bridges follow: Cys46/Cys61 and Cys50/Cys63. Asp64 is subject to Aspartic acid 1-amide. Residues 65–76 constitute a propeptide that is removed on maturation; it reads GKRDVVSSSMAV.

It belongs to the conotoxin J superfamily. As to expression, expressed by the venom duct.

The protein localises to the secreted. In terms of biological role, highly inhibits both nicotinic acetylcholine receptors (neuronal (alpha-3/beta-4) and muscular (alpha-1/beta-1/epsilon/delta) subtypes) and the voltage-gated potassium channel Kv1.6/KCNA6 subtype. This chain is Alpha/kappa-conotoxin-like pl14.3, found in Conus planorbis (Planorbis cone).